The following is an 88-amino-acid chain: UPF0297 protein SSU98_0066 (88 aa).

This sequence belongs to the UPF0297 family.

The polypeptide is UPF0297 protein SSU98_0066 (Streptococcus suis (strain 98HAH33)).